The chain runs to 109 residues: Large ribosomal subunit protein uL23 (109 aa).

It belongs to the universal ribosomal protein uL23 family. As to quaternary structure, part of the 50S ribosomal subunit. Contacts protein L29, and trigger factor when it is bound to the ribosome.

In terms of biological role, one of the early assembly proteins it binds 23S rRNA. One of the proteins that surrounds the polypeptide exit tunnel on the outside of the ribosome. Forms the main docking site for trigger factor binding to the ribosome. The chain is Large ribosomal subunit protein uL23 from Prosthecochloris aestuarii (strain DSM 271 / SK 413).